A 2457-amino-acid chain; its full sequence is Highly reducing polyketide synthase ACTTS3 (2457 aa).

In terms of domain architecture, Ketosynthase family 3 (KS3) spans Arg-5–Ser-435. Catalysis depends on for beta-ketoacyl synthase activity residues Cys-179, His-316, and His-356. The interval Arg-545–Pro-856 is malonyl-CoA:ACP transacylase (MAT) domain. The For malonyltransferase activity role is filled by Ser-641. Residues His-938–Gly-1078 are N-terminal hotdog fold. The dehydratase (DH) domain stretch occupies residues His-938 to Thr-1244. The 309-residue stretch at His-938–Glu-1246 folds into the PKS/mFAS DH domain. The active-site Proton acceptor; for dehydratase activity is the His-970. The tract at residues Thr-1091–Glu-1246 is C-terminal hotdog fold. Asp-1152 (proton donor; for dehydratase activity) is an active-site residue. Residues Glu-1399–Ser-1587 form a methyltransferase (CMet) domain region. A ketoreductase (KR) domain region spans residues Phe-2085 to Arg-2281. One can recognise a Carrier domain in the interval Asp-2374 to Tyr-2451. Ser-2411 carries the post-translational modification O-(pantetheine 4'-phosphoryl)serine.

Pantetheine 4'-phosphate is required as a cofactor.

It participates in mycotoxin biosynthesis. Highly reducing polyketide synthase; part of the gene clusters that mediate the biosynthesis of the host-selective toxins (HSTs) ACT-toxins responsible for brown spot of tangerine disease by the tangerine pathotype which affects tangerines and mandarins. ACT-toxins consist of three moieties, 9,10-epoxy-8-hydroxy-9-methyl-decatrienoic acid (EDA), valine and a polyketide. ACT-toxin I is toxic to both citrus and pear; toxin II the 5''-deoxy derivative of ACT-toxin I, is highly toxic to pear and slightly toxic to citrus. On cellular level, ACT-toxins affect plasma membrane of susceptible cells and cause a sudden increase in loss of K(+) after a few minutes of toxin treatment. The acyl-CoA ligase ACTT1, the hydrolase ACTT2, the enoyl-CoA hydratases ACTT3 and ACTT6, and the acyl-CoA synthetase ACTT5 are all involved in the biosynthesis of the AK-, AF- and ACT-toxin common 9,10-epoxy-8-hydroxy-9-methyl-decatrienoic acid (EDA) structural moiety. The exact role of each enzyme, and of additional enzymes identified within the AF-toxin clusters have still to be determined. On the other hand, ACTTS1 to ACTTS4 are specific to the tangerine pathotype. The function of ACTTS3 is to elongate the polyketide chain portion of ACT-toxin that is unique to this toxin. The enoyl-reductase ACTTS2 might complement the missing enoyl-reductase (ER) domain in ACTTS3 in the synthesis of the polyketide portion of ACT-toxin. The roles of the nonribosomal peptide synthetases-related proteins ACTTS1 and ACTTS4 have also still not been elucidated. The chain is Highly reducing polyketide synthase ACTTS3 from Alternaria alternata (Alternaria rot fungus).